A 1099-amino-acid chain; its full sequence is ATP-dependent helicase/deoxyribonuclease subunit B (1099 aa).

[4Fe-4S] cluster is bound by residues cysteine 766, cysteine 1056, cysteine 1059, and cysteine 1065.

This sequence belongs to the helicase family. AddB/RexB type 2 subfamily. Heterodimer of AddA and RexB. The cofactor is Mg(2+). [4Fe-4S] cluster is required as a cofactor.

Its function is as follows. The heterodimer acts as both an ATP-dependent DNA helicase and an ATP-dependent, dual-direction single-stranded exonuclease. Recognizes the chi site generating a DNA molecule suitable for the initiation of homologous recombination. This subunit has 5' -&gt; 3' nuclease activity but not helicase activity. The sequence is that of ATP-dependent helicase/deoxyribonuclease subunit B from Lactococcus lactis subsp. cremoris (strain SK11).